The sequence spans 385 residues: Probable nitrate transporter NarT (385 aa).

The next 12 helical transmembrane spans lie at 14-34, 47-67, 69-89, 97-117, 139-159, 161-181, 205-225, 246-266, 277-297, 302-322, 330-350, and 359-379; these read TLSLVVGFMAWSIISPLMPYI, IILAIPVILGSILRVPFGYLT, IIGAKWVFFCSFVILLFPIFF, GMLMLSGFFLGVGGAIFSVGV, GNIGTAVSSFLAPPIAGIIGW, TTVRSYLIIIAIFAILMFIFG, LYYLSLWYFITFGAFVAFGLF, GVFIALATFLRPIGGILGDKF, IIMIVGAVILGISSHIALFTI, ISICAGLGNGLIFKLVPSYFA, GIVSMMGGLGGFFPPLVITYV, and LAFILLAIFGVLAFITMGHLY.

This sequence belongs to the major facilitator superfamily. Nitrate/nitrite porter (TC 2.A.1.8) family.

It localises to the cell membrane. Functionally, probably required for nitrate uptake under anoxic conditions. Also possibly involved in excretion of nitrite produced by the dissimilatory reduction of nitrate. The protein is Probable nitrate transporter NarT (narT) of Staphylococcus haemolyticus (strain JCSC1435).